The following is a 265-amino-acid chain: MKPTILLYDSGMGGLTIYDAIRQTLPNAHYLYCFDNAYFPYSERSENVLIEQAVKIVQKIAEKYPLDMVVVACNTASTVVLPALREKFAFPIVGTVPAIKPAAAISQTKTIGLLATKGTVERPYVAELIEKYAKDCIVEKIGTTTLVELVEEKIRTGNVDQDRLSKVVAEWQTHPTLDTVILGCTHFPLVKQELQQLLPNVKYFIDPGNGIANRVSALLSESVPEEPEQNKENIAFCTKIDEEFFKREVIMQQWGFKRLELLNFL.

Substrate contacts are provided by residues 9–10 and 41–42; these read DS and YS. Residue Cys-73 is the Proton donor/acceptor of the active site. Substrate is bound at residue 74–75; the sequence is NT. The Proton donor/acceptor role is filled by Cys-184. 185-186 is a binding site for substrate; sequence TH.

This sequence belongs to the aspartate/glutamate racemases family.

The catalysed reaction is L-glutamate = D-glutamate. It participates in cell wall biogenesis; peptidoglycan biosynthesis. Provides the (R)-glutamate required for cell wall biosynthesis. The polypeptide is Glutamate racemase (Actinobacillus pleuropneumoniae serotype 5b (strain L20)).